A 201-amino-acid chain; its full sequence is Large ribosomal subunit protein uL4 (201 aa).

The segment at 46 to 71 (QKTRAEVIGSGKKPWRQKGTGRARAG) is disordered.

Belongs to the universal ribosomal protein uL4 family. As to quaternary structure, part of the 50S ribosomal subunit.

Functionally, one of the primary rRNA binding proteins, this protein initially binds near the 5'-end of the 23S rRNA. It is important during the early stages of 50S assembly. It makes multiple contacts with different domains of the 23S rRNA in the assembled 50S subunit and ribosome. Its function is as follows. Forms part of the polypeptide exit tunnel. The protein is Large ribosomal subunit protein uL4 of Shewanella sediminis (strain HAW-EB3).